The chain runs to 158 residues: Mitotic-spindle organizing protein 2 (158 aa).

Ser-34 bears the Phosphoserine mark. Residues 81–158 (AGQRVASDSQ…PGRSPPRSGT (78 aa)) are disordered. The segment covering 110–119 (KGGGALGGGP) has biased composition (gly residues). Ser-152 is modified (phosphoserine).

The protein belongs to the MOZART2 family. As to quaternary structure, associates with the gamma-tubulin ring complex (gTuRC) consisting of TUBGCP2, TUBGCP3, TUBGCP4, TUBGCP5 and TUBGCP6 and gamma-tubulin TUBG1 or TUBG2; within the complex, interacts with TUBGCP2; the interaction plays a role in gTuRC activation.

The protein resides in the cytoplasm. It is found in the cytoskeleton. Its subcellular location is the microtubule organizing center. It localises to the centrosome. The protein localises to the spindle. Required for the recruitment and the assembly of the gamma-tubulin ring complex (gTuRC) at the centrosome. The gTuRC regulates the minus-end nucleation of alpha-beta tubulin heterodimers that grow into microtubule protafilaments, a critical step in centrosome duplication and spindle formation. This chain is Mitotic-spindle organizing protein 2 (MZT2), found in Bos taurus (Bovine).